The sequence spans 178 residues: ATP-dependent protease subunit HslV (178 aa).

Residue Thr7 is part of the active site. Residues Gly162, Cys165, and Thr168 each contribute to the Na(+) site.

This sequence belongs to the peptidase T1B family. HslV subfamily. As to quaternary structure, a double ring-shaped homohexamer of HslV is capped on each side by a ring-shaped HslU homohexamer. The assembly of the HslU/HslV complex is dependent on binding of ATP.

The protein localises to the cytoplasm. It carries out the reaction ATP-dependent cleavage of peptide bonds with broad specificity.. Allosterically activated by HslU binding. Functionally, protease subunit of a proteasome-like degradation complex believed to be a general protein degrading machinery. The polypeptide is ATP-dependent protease subunit HslV (Burkholderia vietnamiensis (strain G4 / LMG 22486) (Burkholderia cepacia (strain R1808))).